A 335-amino-acid polypeptide reads, in one-letter code: tRNA N6-adenosine threonylcarbamoyltransferase (335 aa).

3 residues coordinate Fe cation: His-111, His-115, and Tyr-132. Substrate contacts are provided by residues 132 to 136, Asp-164, Gly-177, Glu-181, and Asn-260; that span reads YVSGG. Asp-288 contributes to the Fe cation binding site.

It belongs to the KAE1 / TsaD family. Monomer. Component of the KEOPS complex that consists of Kae1, Bud32, Cgi121 and Pcc1; the whole complex dimerizes. It depends on Fe(2+) as a cofactor.

It is found in the cytoplasm. It carries out the reaction L-threonylcarbamoyladenylate + adenosine(37) in tRNA = N(6)-L-threonylcarbamoyladenosine(37) in tRNA + AMP + H(+). Required for the formation of a threonylcarbamoyl group on adenosine at position 37 (t(6)A37) in tRNAs that read codons beginning with adenine. Is a component of the KEOPS complex that is probably involved in the transfer of the threonylcarbamoyl moiety of threonylcarbamoyl-AMP (TC-AMP) to the N6 group of A37. Kae1 likely plays a direct catalytic role in this reaction, but requires other protein(s) of the complex to fulfill this activity. This Methanococcoides burtonii (strain DSM 6242 / NBRC 107633 / OCM 468 / ACE-M) protein is tRNA N6-adenosine threonylcarbamoyltransferase.